The following is a 109-amino-acid chain: Putative double-stranded DNA mimic protein YciU (109 aa).

Belongs to the putative dsDNA mimic protein family.

May act as a double-stranded DNA (dsDNA) mimic. Probably regulates the activity of a dsDNA-binding protein. The polypeptide is Putative double-stranded DNA mimic protein YciU (Salmonella paratyphi B (strain ATCC BAA-1250 / SPB7)).